Here is a 98-residue protein sequence, read N- to C-terminus: Small ribosomal subunit protein uS19 (98 aa).

Disordered regions lie at residues 1 to 30 and 78 to 98; these read MARS…KKSV and RTFH…PAKK. Over residues 9–24 the composition is skewed to basic and acidic residues; the sequence is PFADKHLTKKVEDANK.

The protein belongs to the universal ribosomal protein uS19 family.

Protein S19 forms a complex with S13 that binds strongly to the 16S ribosomal RNA. The chain is Small ribosomal subunit protein uS19 from Anaeromyxobacter dehalogenans (strain 2CP-C).